Consider the following 525-residue polypeptide: Glutamate--cysteine ligase (525 aa).

It belongs to the glutamate--cysteine ligase type 1 family. Type 1 subfamily.

The catalysed reaction is L-cysteine + L-glutamate + ATP = gamma-L-glutamyl-L-cysteine + ADP + phosphate + H(+). It participates in sulfur metabolism; glutathione biosynthesis; glutathione from L-cysteine and L-glutamate: step 1/2. This Vibrio vulnificus (strain YJ016) protein is Glutamate--cysteine ligase.